The sequence spans 918 residues: von Willebrand factor A domain-containing protein DDB_G0292016 (918 aa).

The region spanning K44 to S172 is the VIT domain. The VWFA domain maps to E299–L467. Positions V625–V814 are disordered. The segment covering A650–S690 has biased composition (low complexity). Over residues Y716 to L746 the composition is skewed to acidic residues. The span at D752–V774 shows a compositional bias: basic and acidic residues. A compositionally biased stretch (low complexity) spans S777–V814.

The chain is von Willebrand factor A domain-containing protein DDB_G0292016 from Dictyostelium discoideum (Social amoeba).